The primary structure comprises 128 residues: Cytochrome c-type biogenesis protein CcmE (128 aa).

Over 1-8 (MQKRVRNR) the chain is Cytoplasmic. The chain crosses the membrane as a helical; Signal-anchor for type II membrane protein span at residues 9 to 29 (LITIIICFCSACLGISIILYN). Residues 30 to 128 (LEKNIVFFLP…KHDENYRPPQ (99 aa)) are Periplasmic-facing. His-120 and Tyr-124 together coordinate heme.

It belongs to the CcmE/CycJ family.

It is found in the cell inner membrane. Functionally, heme chaperone required for the biogenesis of c-type cytochromes. Transiently binds heme delivered by CcmC and transfers the heme to apo-cytochromes in a process facilitated by CcmF and CcmH. This is Cytochrome c-type biogenesis protein CcmE from Rickettsia conorii (strain ATCC VR-613 / Malish 7).